The sequence spans 626 residues: Elongation factor 4 (626 aa).

The tr-type G domain maps to 14–195 (SVIRNFCIIA…QIVMDVPAPH (182 aa)). GTP-binding positions include 26–31 (DHGKST) and 142–145 (NKID). Residues 603–626 (LSTGEDSNDRDTKDKIRAAQKTEG) form a disordered region. The segment covering 609 to 626 (SNDRDTKDKIRAAQKTEG) has biased composition (basic and acidic residues).

It belongs to the TRAFAC class translation factor GTPase superfamily. Classic translation factor GTPase family. LepA subfamily.

It localises to the cell membrane. It catalyses the reaction GTP + H2O = GDP + phosphate + H(+). Functionally, required for accurate and efficient protein synthesis under certain stress conditions. May act as a fidelity factor of the translation reaction, by catalyzing a one-codon backward translocation of tRNAs on improperly translocated ribosomes. Back-translocation proceeds from a post-translocation (POST) complex to a pre-translocation (PRE) complex, thus giving elongation factor G a second chance to translocate the tRNAs correctly. Binds to ribosomes in a GTP-dependent manner. In Bifidobacterium longum subsp. infantis (strain ATCC 15697 / DSM 20088 / JCM 1222 / NCTC 11817 / S12), this protein is Elongation factor 4.